The primary structure comprises 347 residues: Doublecortin domain-containing protein 2C (347 aa).

Doublecortin domains follow at residues 16-98 and 136-217; these read KTIL…LDYI and RYIN…IPYW. The segment at 235 to 260 is disordered; the sequence is KYTQTKKRVESKVKEPLQNDSVPPRS. Basic and acidic residues predominate over residues 241–251; the sequence is KRVESKVKEPL.

It is found in the cell projection. The protein resides in the cilium. It localises to the flagellum. The protein localises to the cytoplasm. The sequence is that of Doublecortin domain-containing protein 2C from Mus musculus (Mouse).